We begin with the raw amino-acid sequence, 103 residues long: Small ribosomal subunit protein uS10 (103 aa).

This sequence belongs to the universal ribosomal protein uS10 family. In terms of assembly, part of the 30S ribosomal subunit.

Functionally, involved in the binding of tRNA to the ribosomes. In Neorickettsia sennetsu (strain ATCC VR-367 / Miyayama) (Ehrlichia sennetsu), this protein is Small ribosomal subunit protein uS10.